Here is a 428-residue protein sequence, read N- to C-terminus: Aerobic C4-dicarboxylate transport protein (428 aa).

9 helical membrane-spanning segments follow: residues 5–27 (LFKS…GHYY), 47–64 (MIIA…IAGM), 77–99 (ALLY…VNVV), 141–163 (VIGA…FGFA), 184–206 (VIFG…AMAF), 216–238 (LVQL…VVVL), 289–311 (VVGL…YLTM), 326–348 (IFHQ…GVTG), and 353–375 (VLAA…ILGI).

It belongs to the dicarboxylate/amino acid:cation symporter (DAACS) (TC 2.A.23) family.

It is found in the cell inner membrane. Functionally, responsible for the transport of dicarboxylates such as succinate, fumarate, and malate from the periplasm across the inner membrane. The polypeptide is Aerobic C4-dicarboxylate transport protein (dctA) (Salmonella typhimurium (strain LT2 / SGSC1412 / ATCC 700720)).